A 199-amino-acid polypeptide reads, in one-letter code: Glycerol-3-phosphate acyltransferase (199 aa).

5 helical membrane-spanning segments follow: residues 3–23, 50–70, 78–98, 113–133, and 154–174; these read AAVW…GVLV, WGPA…AVLV, DWML…SVFL, LLFL…SVIL, and LALG…LLIF.

Belongs to the PlsY family. In terms of assembly, probably interacts with PlsX.

The protein localises to the cell inner membrane. It carries out the reaction an acyl phosphate + sn-glycerol 3-phosphate = a 1-acyl-sn-glycero-3-phosphate + phosphate. The protein operates within lipid metabolism; phospholipid metabolism. Catalyzes the transfer of an acyl group from acyl-phosphate (acyl-PO(4)) to glycerol-3-phosphate (G3P) to form lysophosphatidic acid (LPA). This enzyme utilizes acyl-phosphate as fatty acyl donor, but not acyl-CoA or acyl-ACP. This Thermus thermophilus (strain ATCC 27634 / DSM 579 / HB8) protein is Glycerol-3-phosphate acyltransferase.